A 536-amino-acid chain; its full sequence is Ribulokinase (536 aa).

The protein belongs to the ribulokinase family.

The enzyme catalyses D-ribulose + ATP = D-ribulose 5-phosphate + ADP + H(+). The catalysed reaction is L-ribulose + ATP = L-ribulose 5-phosphate + ADP + H(+). The protein operates within carbohydrate degradation; L-arabinose degradation via L-ribulose; D-xylulose 5-phosphate from L-arabinose (bacterial route): step 2/3. This is Ribulokinase from Staphylococcus epidermidis (strain ATCC 35984 / DSM 28319 / BCRC 17069 / CCUG 31568 / BM 3577 / RP62A).